A 1037-amino-acid chain; its full sequence is Ribonuclease E (1037 aa).

3 disordered regions span residues 1–23, 47–90, and 106–369; these read MAED…LPER, FDGR…ETPV, and VSEA…PILS. Basic and acidic residues predominate over residues 47–67; the sequence is FDGRQRSAHSTVDKADAERVR. Low complexity-rich tracts occupy residues 68–90 and 106–126; these read AALT…ETPV and VSEA…PAAE. 2 stretches are compositionally biased toward acidic residues: residues 127–141 and 196–226; these read AEAE…EAET and VVDD…DDDQ. Basic residues predominate over residues 230–242; it reads PRRRRRGRRGRGR. Acidic residues predominate over residues 248–284; the sequence is NDDATSDADTDSTEDQTDGDEQESGEDSDDSGDEDST. Positions 291 to 301 are enriched in basic residues; that stretch reads RRRRRRRRRKS. Residues 320 to 335 are compositionally biased toward basic and acidic residues; sequence VHERAPRTERSDKSDD. In terms of domain architecture, S1 motif spans 427–504; that stretch reads GNIYLGIVQN…GHKGARLTTQ (78 aa). Residues 561–589 adopt a coiled-coil conformation; sequence EDIRSDVERLQKRWSEIEAKAAEVTEKKA. Residues aspartate 694 and aspartate 738 each coordinate Mg(2+). The Zn(2+) site is built by cysteine 796 and cysteine 799. Residues 810–1037 are disordered; that stretch reads PIDSASSNGG…ARPAGPPSHD (228 aa). The segment covering 834-843 has biased composition (basic residues); that stretch reads RRGKRGKKGA. The segment covering 844–864 has biased composition (basic and acidic residues); the sequence is ARTEEVHVAKVPDHTPGEHPM. Residues 879-891 show a composition bias toward acidic residues; the sequence is EDHEDHEDHETAE. Residues 897 to 913 show a composition bias toward basic and acidic residues; it reads EVRDDTRDEHDADERAH. Acidic residues predominate over residues 923–1006; sequence GDEDLDDSDE…DSDSDEDEEP (84 aa).

This sequence belongs to the RNase E/G family. Assembles into a homotetramer formed by a dimer of dimers. Interacts with DNA-binding protein HhupB. The cofactor is Mg(2+). Zn(2+) serves as cofactor.

It is found in the cytoplasm. It catalyses the reaction Endonucleolytic cleavage of single-stranded RNA in A- and U-rich regions.. Its function is as follows. Endoribonuclease that plays a central role in RNA processing and decay. Plays a major role in pre-16S rRNA maturation, probably generating the mature 5'-end, and a minor role in pre-5S and pre-23S rRNA maturation. Probably also processes tRNA. RNase E and HupB jointly contribute to cellular adaptation to changing growth conditions and survival during antibiotic treatment. Overexpression or depletion leads to changes in gene expression; overexpression induces metabolic slowdown and cell stress while depleted strains grow less well than induced strains. This is Ribonuclease E (rne) from Mycolicibacterium smegmatis (strain ATCC 700084 / mc(2)155) (Mycobacterium smegmatis).